The sequence spans 670 residues: DNA ligase (670 aa).

Residues 32–36 (DAEYD), 81–82 (SL), and glutamate 111 contribute to the NAD(+) site. Catalysis depends on lysine 113, which acts as the N6-AMP-lysine intermediate. NAD(+) is bound by residues arginine 134, glutamate 171, lysine 290, and lysine 314. Zn(2+) contacts are provided by cysteine 408, cysteine 411, cysteine 426, and cysteine 432. Residues 591 to 670 (EEALSLKGQT…DGLLAVLAGE (80 aa)) enclose the BRCT domain.

It belongs to the NAD-dependent DNA ligase family. LigA subfamily. Mg(2+) is required as a cofactor. The cofactor is Mn(2+).

The catalysed reaction is NAD(+) + (deoxyribonucleotide)n-3'-hydroxyl + 5'-phospho-(deoxyribonucleotide)m = (deoxyribonucleotide)n+m + AMP + beta-nicotinamide D-nucleotide.. Functionally, DNA ligase that catalyzes the formation of phosphodiester linkages between 5'-phosphoryl and 3'-hydroxyl groups in double-stranded DNA using NAD as a coenzyme and as the energy source for the reaction. It is essential for DNA replication and repair of damaged DNA. The protein is DNA ligase of Shewanella sediminis (strain HAW-EB3).